The sequence spans 356 residues: Heparan sulfate 2-O-sulfotransferase 1 (356 aa).

The Cytoplasmic segment spans residues M1–K11. A helical; Signal-anchor for type II membrane protein membrane pass occupies residues L12–E28. Positions M24–R51 form a coiled coil. Over N29–N356 the chain is Lumenal. Adenosine 3',5'-bisphosphate is bound by residues K83, T84, A85, S86, T87, and S88. N-linked (GlcNAc...) asparagine glycans are attached at residues N108 and N127. Residues H140 and H142 contribute to the active site. 2 residues coordinate adenosine 3',5'-bisphosphate: R164 and S172. Cystine bridges form between C201–C209 and C222–C228. Residues Y279, S285, T290, and K293 each contribute to the adenosine 3',5'-bisphosphate site.

The protein belongs to the sulfotransferase 3 family. In terms of assembly, homotrimer. Interacts with the C5-epimerase GLCE. Post-translationally, N-glycosylated.

The protein localises to the golgi apparatus membrane. Catalyzes the transfer of a sulfo group from 3'-phospho-5'-adenylyl sulfate (PAPS) to the 2-OH position of iduronic acid (IdoA) or glucuronic acid (GlcA) within the heparan sulfate (HS) chain and participates in HS biosynthesis. Required for metanephric development of kidney formation, suggesting that 2-O-sulfation within HS is essential for signaling between ureteric bud and metanephric mesenchyme. This Cricetulus griseus (Chinese hamster) protein is Heparan sulfate 2-O-sulfotransferase 1.